The chain runs to 80 residues: MDIQKQIVDILAEATGEDFSDNMDQELYESGIMDSMTTVQMLLTLQETFDITVPVSEFNRDDWNTPNKLVEQVKKLQDEE.

In terms of domain architecture, Carrier spans 1–77; sequence MDIQKQIVDI…KLVEQVKKLQ (77 aa). O-(pantetheine 4'-phosphoryl)serine is present on serine 35.

Belongs to the DltC family. Post-translationally, 4'-phosphopantetheine is transferred from CoA to a specific serine of apo-DCP.

It localises to the cytoplasm. The protein operates within cell wall biogenesis; lipoteichoic acid biosynthesis. Its function is as follows. Carrier protein involved in the D-alanylation of lipoteichoic acid (LTA). The loading of thioester-linked D-alanine onto DltC is catalyzed by D-alanine--D-alanyl carrier protein ligase DltA. The DltC-carried D-alanyl group is further transferred to cell membrane phosphatidylglycerol (PG) by forming an ester bond, probably catalyzed by DltD. D-alanylation of LTA plays an important role in modulating the properties of the cell wall in Gram-positive bacteria, influencing the net charge of the cell wall. This Lactobacillus delbrueckii subsp. bulgaricus (strain ATCC 11842 / DSM 20081 / BCRC 10696 / JCM 1002 / NBRC 13953 / NCIMB 11778 / NCTC 12712 / WDCM 00102 / Lb 14) protein is D-alanyl carrier protein.